Consider the following 56-residue polypeptide: Per os infectivity factor AC110 (56 aa).

Plays an essential role in the process of oral infection. May participate in the crossing of occlusion-derived virions through the host peritrophic membrane during oral infection. The protein is Per os infectivity factor AC110 of Autographa californica nuclear polyhedrosis virus (AcMNPV).